The primary structure comprises 311 residues: Aspartate carbamoyltransferase catalytic subunit (311 aa).

R55 and T56 together coordinate carbamoyl phosphate. K85 is a binding site for L-aspartate. 3 residues coordinate carbamoyl phosphate: R106, H135, and Q138. Residues R168 and R230 each coordinate L-aspartate. Carbamoyl phosphate-binding residues include L268 and P269.

Belongs to the aspartate/ornithine carbamoyltransferase superfamily. ATCase family. As to quaternary structure, heterododecamer (2C3:3R2) of six catalytic PyrB chains organized as two trimers (C3), and six regulatory PyrI chains organized as three dimers (R2).

The catalysed reaction is carbamoyl phosphate + L-aspartate = N-carbamoyl-L-aspartate + phosphate + H(+). It functions in the pathway pyrimidine metabolism; UMP biosynthesis via de novo pathway; (S)-dihydroorotate from bicarbonate: step 2/3. In terms of biological role, catalyzes the condensation of carbamoyl phosphate and aspartate to form carbamoyl aspartate and inorganic phosphate, the committed step in the de novo pyrimidine nucleotide biosynthesis pathway. This is Aspartate carbamoyltransferase catalytic subunit from Citrobacter koseri (strain ATCC BAA-895 / CDC 4225-83 / SGSC4696).